Consider the following 391-residue polypeptide: Digeranylgeranylglycerophospholipid reductase (391 aa).

Residues Gly-18, Glu-37, Cys-48, Ala-49, Ala-51, Arg-98, Ala-122, Asp-279, Gly-291, and Ile-292 each contribute to the FAD site.

The protein belongs to the geranylgeranyl reductase family. DGGGPL reductase subfamily. The cofactor is FAD.

It catalyses the reaction a 2,3-bis-O-phytanyl-sn-glycerol 1-phospholipid + 8 A = a 2,3-bis-O-(geranylgeranyl)-sn-glycerol 1-phospholipid + 8 AH2. The enzyme catalyses 2,3-bis-O-(phytanyl)-sn-glycerol 1-phosphate + 8 A = 2,3-bis-O-(geranylgeranyl)-sn-glycerol 1-phosphate + 8 AH2. The catalysed reaction is CDP-2,3-bis-O-(geranylgeranyl)-sn-glycerol + 8 AH2 = CDP-2,3-bis-O-(phytanyl)-sn-glycerol + 8 A. It carries out the reaction archaetidylserine + 8 AH2 = 2,3-bis-O-phytanyl-sn-glycero-3-phospho-L-serine + 8 A. It functions in the pathway membrane lipid metabolism; glycerophospholipid metabolism. Functionally, is involved in the reduction of 2,3-digeranylgeranylglycerophospholipids (unsaturated archaeols) into 2,3-diphytanylglycerophospholipids (saturated archaeols) in the biosynthesis of archaeal membrane lipids. Catalyzes the formation of archaetidic acid (2,3-di-O-phytanyl-sn-glyceryl phosphate) from 2,3-di-O-geranylgeranylglyceryl phosphate (DGGGP) via the hydrogenation of each double bond of the isoprenoid chains. Is also probably able to reduce double bonds of geranyl groups in CDP-2,3-bis-O-(geranylgeranyl)-sn-glycerol and archaetidylserine, thus acting at various stages in the biosynthesis of archaeal membrane lipids. This is Digeranylgeranylglycerophospholipid reductase from Methanocaldococcus jannaschii (strain ATCC 43067 / DSM 2661 / JAL-1 / JCM 10045 / NBRC 100440) (Methanococcus jannaschii).